A 54-amino-acid polypeptide reads, in one-letter code: Large ribosomal subunit protein bL32 (54 aa).

A disordered region spans residues 1-26 (MAVQKNKPTRSKRGMRRSHDSLTAPH). Positions 7-16 (KPTRSKRGMR) are enriched in basic residues.

Belongs to the bacterial ribosomal protein bL32 family.

The polypeptide is Large ribosomal subunit protein bL32 (Buchnera aphidicola subsp. Acyrthosiphon pisum (strain 5A)).